Reading from the N-terminus, the 251-residue chain is Insertion sequence IS5376 putative ATP-binding protein (251 aa).

105–112 (GPPGIGKT) provides a ligand contact to ATP.

Belongs to the IS21/IS1162 putative ATP-binding protein family.

This chain is Insertion sequence IS5376 putative ATP-binding protein, found in Geobacillus stearothermophilus (Bacillus stearothermophilus).